Here is a 663-residue protein sequence, read N- to C-terminus: UvrABC system protein B (663 aa).

Positions 1–10 (MIDKRDDKPF) are enriched in basic and acidic residues. Positions 1–23 (MIDKRDDKPFKLKSKYKPSGDQP) are disordered. The region spanning 31–271 (DNIEGGEKAQ…EQSIAKIQAE (241 aa)) is the Helicase ATP-binding domain. 44–51 (GATGTGKT) is an ATP binding site. The Beta-hairpin signature appears at 97–120 (YYDYYQPEAYVPSSDTYIEKDSSV). The 167-residue stretch at 435–601 (QMDDLLGEIN…TIKKDIRGLI (167 aa)) folds into the Helicase C-terminal domain. The UVR domain occupies 627–662 (KEAINALQKQMQEAAELLDFELAAQMRDLILELKLM).

The protein belongs to the UvrB family. In terms of assembly, forms a heterotetramer with UvrA during the search for lesions. Interacts with UvrC in an incision complex.

The protein localises to the cytoplasm. The UvrABC repair system catalyzes the recognition and processing of DNA lesions. A damage recognition complex composed of 2 UvrA and 2 UvrB subunits scans DNA for abnormalities. Upon binding of the UvrA(2)B(2) complex to a putative damaged site, the DNA wraps around one UvrB monomer. DNA wrap is dependent on ATP binding by UvrB and probably causes local melting of the DNA helix, facilitating insertion of UvrB beta-hairpin between the DNA strands. Then UvrB probes one DNA strand for the presence of a lesion. If a lesion is found the UvrA subunits dissociate and the UvrB-DNA preincision complex is formed. This complex is subsequently bound by UvrC and the second UvrB is released. If no lesion is found, the DNA wraps around the other UvrB subunit that will check the other stand for damage. The protein is UvrABC system protein B of Streptococcus pyogenes serotype M4 (strain MGAS10750).